We begin with the raw amino-acid sequence, 332 residues long: Large ribosomal subunit protein uL10 (332 aa).

The tract at residues 294–332 (QAAAAPVAVEDNTEEPEEEEEEEEDAAESAAAGLGALFG) is disordered. Residues 304-320 (DNTEEPEEEEEEEEDAA) show a composition bias toward acidic residues.

Belongs to the universal ribosomal protein uL10 family. In terms of assembly, part of the 50S ribosomal subunit. Forms part of the ribosomal stalk which helps the ribosome interact with GTP-bound translation factors. Forms a heptameric L10(L12)2(L12)2(L12)2 complex, where L10 forms an elongated spine to which the L12 dimers bind in a sequential fashion.

In terms of biological role, forms part of the ribosomal stalk, playing a central role in the interaction of the ribosome with GTP-bound translation factors. This chain is Large ribosomal subunit protein uL10, found in Methanosphaera stadtmanae (strain ATCC 43021 / DSM 3091 / JCM 11832 / MCB-3).